Consider the following 327-residue polypeptide: E3 ubiquitin ligase RNF121 (327 aa).

A2 is subject to N-acetylalanine. Helical transmembrane passes span 50–70 (MHAEMVLILIATLVVAQLLLV), 79–99 (SYNMVTLFQMWVVPLYFTVKL), 100–120 (HWWRFLVIWILFSAVTAFVTF), 148–168 (ATGIVGYMAVMFTLFGLNLLF), and 172–192 (PEDAMDFGISLLFYGLYYGVL). Residues 226–276 (CAVCGQQIFVDVSEEGIIENTYRLSCNHVFHEFCIRGWCIVGKKQTCPYCK) form an RING-type; atypical zinc finger. A helical membrane pass occupies residues 306-326 (LVAWQPVIIGVVQGINYILGL).

This sequence belongs to the RNF121 family.

It is found in the endoplasmic reticulum membrane. It catalyses the reaction S-ubiquitinyl-[E2 ubiquitin-conjugating enzyme]-L-cysteine + [acceptor protein]-L-lysine = [E2 ubiquitin-conjugating enzyme]-L-cysteine + N(6)-ubiquitinyl-[acceptor protein]-L-lysine.. It participates in protein modification; protein ubiquitination. Its function is as follows. E3 ubiquitin ligase which accepts ubiquitin and transfers it to substrates thereby promoting their degradation by the endoplasmic reticulum-associated degradation (ERAD) pathway which is a pathway involved in ubiquitin-dependent degradation of misfolded endoplasmic reticulum proteins. May regulate the unfolded protein response to reduce endoplasmic reticulum stress. The polypeptide is E3 ubiquitin ligase RNF121 (RNF121) (Homo sapiens (Human)).